The primary structure comprises 987 residues: Nuclear matrix constituent protein 1b (987 aa).

The tract at residues 1-25 is disordered; it reads MASPRSAGGVGGGGGGGGGSGGAAA. Gly residues predominate over residues 8–24; the sequence is GGVGGGGGGGGGSGGAA. Coiled-coil stretches lie at residues 403-545 and 594-717; these read LAEL…ERRA and LSKI…DREA. 2 stretches are compositionally biased toward basic and acidic residues: residues 752–764 and 898–908; these read SDIN…HDNS and CKEHEYGDKGP. 2 disordered regions span residues 752 to 775 and 887 to 987; these read SDIN…FGRK and HDEA…FLIT. Over residues 944–954 the composition is skewed to polar residues; it reads ATVSATETSNV. Acidic residues predominate over residues 956–973; it reads GPEDNNDSDEEDEEEEEE.

Belongs to the CRWN family. Interacts with SWI3C.

It localises to the nucleus matrix. The protein resides in the nucleus lamina. Architectural component of nuclear structure that plays different roles in controlling nuclear size and morphology. Involved in the modification of chromatin accessibility by interacting with SWI3C, a component of the chromatin-remodeling complex, to thus reduce the suppression effect of the complex. Acts as positive regulator of drought resistance and modulates root growth. Positively regulates the expression of genes related to root growth and drought resistance. The sequence is that of Nuclear matrix constituent protein 1b from Oryza sativa subsp. japonica (Rice).